A 77-amino-acid chain; its full sequence is Large ribosomal subunit protein bL28 (77 aa).

Belongs to the bacterial ribosomal protein bL28 family.

The protein is Large ribosomal subunit protein bL28 of Polynucleobacter asymbioticus (strain DSM 18221 / CIP 109841 / QLW-P1DMWA-1) (Polynucleobacter necessarius subsp. asymbioticus).